We begin with the raw amino-acid sequence, 424 residues long: 3-isopropylmalate dehydratase large subunit (424 aa).

Residues Cys-299, Cys-359, and Cys-362 each coordinate [4Fe-4S] cluster.

This sequence belongs to the aconitase/IPM isomerase family. LeuC type 2 subfamily. In terms of assembly, heterodimer of LeuC and LeuD. It depends on [4Fe-4S] cluster as a cofactor.

It carries out the reaction (2R,3S)-3-isopropylmalate = (2S)-2-isopropylmalate. Its pathway is amino-acid biosynthesis; L-leucine biosynthesis; L-leucine from 3-methyl-2-oxobutanoate: step 2/4. In terms of biological role, catalyzes the isomerization between 2-isopropylmalate and 3-isopropylmalate, via the formation of 2-isopropylmaleate. In Hydrogenobaculum sp. (strain Y04AAS1), this protein is 3-isopropylmalate dehydratase large subunit.